A 311-amino-acid chain; its full sequence is MSNQLLDRVVAEIADEMAQRADRGEVASYIPQLARVDPKAFGLAVIGADGHIAAAGDADVPFSIQSISKVFTLTLALGKAGDRLWRRVGREPSGSAFNSIVQLEHERGIPRNPFINAGAIAVTDLILSGHQPREALGEILRFMQFLAGDSSIAIDEAVAKSEQRTGFRNAALANYMKSFGVLDNPVEYTLGVYFHHCAIAMSCRQLAMAGRFLAHNGQNPSTGLNVVSSERARRINALMLTCGHYDGSGEFAYRVGLPGKSGVGGGILAVAPGRASIAVWAPGLDAAGNSHLGRVALEGLTKRMGWSIFGV.

Substrate contacts are provided by Ser66, Asn116, Glu162, Asn169, Tyr193, Tyr245, and Val263.

This sequence belongs to the glutaminase family. As to quaternary structure, homotetramer.

The catalysed reaction is L-glutamine + H2O = L-glutamate + NH4(+). This is Glutaminase from Rhodopseudomonas palustris (strain TIE-1).